Here is a 753-residue protein sequence, read N- to C-terminus: 5-methyltetrahydropteroyltriglutamate--homocysteine methyltransferase (753 aa).

5-methyltetrahydropteroyltri-L-glutamate-binding positions include 17–20 and K117; that span reads RELK. L-homocysteine-binding positions include 431-433 and E484; that span reads IGS. L-methionine-binding positions include 431 to 433 and E484; that span reads IGS. 5-methyltetrahydropteroyltri-L-glutamate is bound by residues 515–516 and W561; that span reads RC. D599 contributes to the L-homocysteine binding site. L-methionine is bound at residue D599. E605 contacts 5-methyltetrahydropteroyltri-L-glutamate. H641, C643, and E665 together coordinate Zn(2+). The Proton donor role is filled by H694. C726 contacts Zn(2+).

It belongs to the vitamin-B12 independent methionine synthase family. Requires Zn(2+) as cofactor.

It carries out the reaction 5-methyltetrahydropteroyltri-L-glutamate + L-homocysteine = tetrahydropteroyltri-L-glutamate + L-methionine. The protein operates within amino-acid biosynthesis; L-methionine biosynthesis via de novo pathway; L-methionine from L-homocysteine (MetE route): step 1/1. Catalyzes the transfer of a methyl group from 5-methyltetrahydrofolate to homocysteine resulting in methionine formation. In Shigella dysenteriae serotype 1 (strain Sd197), this protein is 5-methyltetrahydropteroyltriglutamate--homocysteine methyltransferase.